Here is a 488-residue protein sequence, read N- to C-terminus: 3-octaprenyl-4-hydroxybenzoate carboxy-lyase (488 aa).

Mn(2+) is bound at residue Asn172. Prenylated FMN is bound by residues 175-177 (IYR), 189-191 (RWL), and 194-195 (RG). A Mn(2+)-binding site is contributed by Glu238. Asp287 (proton donor) is an active-site residue.

It belongs to the UbiD family. As to quaternary structure, homohexamer. It depends on prenylated FMN as a cofactor. Mn(2+) is required as a cofactor.

The protein resides in the cell membrane. It catalyses the reaction a 4-hydroxy-3-(all-trans-polyprenyl)benzoate + H(+) = a 2-(all-trans-polyprenyl)phenol + CO2. Its pathway is cofactor biosynthesis; ubiquinone biosynthesis. Catalyzes the decarboxylation of 3-octaprenyl-4-hydroxy benzoate to 2-octaprenylphenol, an intermediate step in ubiquinone biosynthesis. This Pseudomonas putida (strain ATCC 47054 / DSM 6125 / CFBP 8728 / NCIMB 11950 / KT2440) protein is 3-octaprenyl-4-hydroxybenzoate carboxy-lyase.